The sequence spans 481 residues: Glutamyl-tRNA(Gln) amidotransferase subunit A (481 aa).

Residues K74 and S149 each act as charge relay system in the active site. S173 serves as the catalytic Acyl-ester intermediate.

It belongs to the amidase family. GatA subfamily. In terms of assembly, heterotrimer of A, B and C subunits.

The catalysed reaction is L-glutamyl-tRNA(Gln) + L-glutamine + ATP + H2O = L-glutaminyl-tRNA(Gln) + L-glutamate + ADP + phosphate + H(+). Its function is as follows. Allows the formation of correctly charged Gln-tRNA(Gln) through the transamidation of misacylated Glu-tRNA(Gln) in organisms which lack glutaminyl-tRNA synthetase. The reaction takes place in the presence of glutamine and ATP through an activated gamma-phospho-Glu-tRNA(Gln). The sequence is that of Glutamyl-tRNA(Gln) amidotransferase subunit A from Francisella philomiragia subsp. philomiragia (strain ATCC 25017 / CCUG 19701 / FSC 153 / O#319-036).